We begin with the raw amino-acid sequence, 163 residues long: Phosphopantetheine adenylyltransferase (163 aa).

Thr10 is a binding site for substrate. ATP contacts are provided by residues 10 to 11 (TF) and His18. 3 residues coordinate substrate: Lys42, Leu74, and Arg88. ATP is bound by residues 89–91 (GLR), Glu99, and 124–130 (NSFISST).

The protein belongs to the bacterial CoaD family. As to quaternary structure, homohexamer. Mg(2+) serves as cofactor.

Its subcellular location is the cytoplasm. The catalysed reaction is (R)-4'-phosphopantetheine + ATP + H(+) = 3'-dephospho-CoA + diphosphate. It functions in the pathway cofactor biosynthesis; coenzyme A biosynthesis; CoA from (R)-pantothenate: step 4/5. Functionally, reversibly transfers an adenylyl group from ATP to 4'-phosphopantetheine, yielding dephospho-CoA (dPCoA) and pyrophosphate. This is Phosphopantetheine adenylyltransferase from Shewanella baltica (strain OS155 / ATCC BAA-1091).